Reading from the N-terminus, the 319-residue chain is tRNA dimethylallyltransferase (319 aa).

Residue 15–22 (GPTASGKS) participates in ATP binding. Position 17 to 22 (17 to 22 (TASGKS)) interacts with substrate. 2 interaction with substrate tRNA regions span residues 40-43 (DSRQ) and 164-168 (QRLVR).

This sequence belongs to the IPP transferase family. As to quaternary structure, monomer. Requires Mg(2+) as cofactor.

It catalyses the reaction adenosine(37) in tRNA + dimethylallyl diphosphate = N(6)-dimethylallyladenosine(37) in tRNA + diphosphate. In terms of biological role, catalyzes the transfer of a dimethylallyl group onto the adenine at position 37 in tRNAs that read codons beginning with uridine, leading to the formation of N6-(dimethylallyl)adenosine (i(6)A). The polypeptide is tRNA dimethylallyltransferase (Chlorobium phaeobacteroides (strain DSM 266 / SMG 266 / 2430)).